The chain runs to 147 residues: Large ribosomal subunit protein uL13 (147 aa).

The protein belongs to the universal ribosomal protein uL13 family. In terms of assembly, part of the 50S ribosomal subunit.

This protein is one of the early assembly proteins of the 50S ribosomal subunit, although it is not seen to bind rRNA by itself. It is important during the early stages of 50S assembly. The chain is Large ribosomal subunit protein uL13 from Frankia casuarinae (strain DSM 45818 / CECT 9043 / HFP020203 / CcI3).